A 268-amino-acid polypeptide reads, in one-letter code: Thiazole synthase (268 aa).

Lys-108 functions as the Schiff-base intermediate with DXP in the catalytic mechanism. 1-deoxy-D-xylulose 5-phosphate-binding positions include Gly-169, 195–196 (AG), and 217–218 (NS). The disordered stretch occupies residues 248–268 (RLKENPLASPSSPLEGVISNN). The segment covering 255-268 (ASPSSPLEGVISNN) has biased composition (polar residues).

This sequence belongs to the ThiG family. Homotetramer. Forms heterodimers with either ThiH or ThiS.

The protein resides in the cytoplasm. The catalysed reaction is [ThiS sulfur-carrier protein]-C-terminal-Gly-aminoethanethioate + 2-iminoacetate + 1-deoxy-D-xylulose 5-phosphate = [ThiS sulfur-carrier protein]-C-terminal Gly-Gly + 2-[(2R,5Z)-2-carboxy-4-methylthiazol-5(2H)-ylidene]ethyl phosphate + 2 H2O + H(+). The protein operates within cofactor biosynthesis; thiamine diphosphate biosynthesis. Its function is as follows. Catalyzes the rearrangement of 1-deoxy-D-xylulose 5-phosphate (DXP) to produce the thiazole phosphate moiety of thiamine. Sulfur is provided by the thiocarboxylate moiety of the carrier protein ThiS. In vitro, sulfur can be provided by H(2)S. The protein is Thiazole synthase of Prochlorococcus marinus (strain NATL1A).